Here is a 137-residue protein sequence, read N- to C-terminus: Large ribosomal subunit protein uL16 (137 aa).

Belongs to the universal ribosomal protein uL16 family. Part of the 50S ribosomal subunit.

Functionally, binds 23S rRNA and is also seen to make contacts with the A and possibly P site tRNAs. In Rhizobium etli (strain CIAT 652), this protein is Large ribosomal subunit protein uL16.